A 196-amino-acid polypeptide reads, in one-letter code: Ribosome maturation factor RimP (196 aa).

The tract at residues 163–196 (GLAPSKPTGPAPKRPKPNTNSSSNEPAAKKPRAE) is disordered.

It belongs to the RimP family.

The protein resides in the cytoplasm. In terms of biological role, required for maturation of 30S ribosomal subunits. The sequence is that of Ribosome maturation factor RimP from Stenotrophomonas maltophilia (strain K279a).